The sequence spans 216 residues: MSNPIIDIAALRKSYERAELNEDASHADPLKQFDQWLNEAIAAQVPEPNAMTLATVDSKLRPSTRVVLVKGYDARGIVWFTNYNSRKGLELAGNPYAALQFHWVELERVVRIEGVVEKVSAEESDAYFNSRPLDSRIGAWASPQSEVIASRSVLVTNAAKYGAKFLLQPPRPPHWGGYRLQPDNWQFWQGRKSRLHDRLRYTLQADSSWLRERLAP.

Substrate contacts are provided by residues 12 to 15 (RKSY) and Lys70. FMN-binding positions include 65–70 (RVVLVK), 80–81 (FT), Arg86, and Lys87. Residues Tyr127, Arg131, and Ser135 each contribute to the substrate site. FMN-binding positions include 144 to 145 (QS) and Trp188. 194–196 (RLH) serves as a coordination point for substrate. FMN is bound at residue Arg198.

Belongs to the pyridoxamine 5'-phosphate oxidase family. As to quaternary structure, homodimer. Requires FMN as cofactor.

The enzyme catalyses pyridoxamine 5'-phosphate + O2 + H2O = pyridoxal 5'-phosphate + H2O2 + NH4(+). It carries out the reaction pyridoxine 5'-phosphate + O2 = pyridoxal 5'-phosphate + H2O2. Its pathway is cofactor metabolism; pyridoxal 5'-phosphate salvage; pyridoxal 5'-phosphate from pyridoxamine 5'-phosphate: step 1/1. It participates in cofactor metabolism; pyridoxal 5'-phosphate salvage; pyridoxal 5'-phosphate from pyridoxine 5'-phosphate: step 1/1. In terms of biological role, catalyzes the oxidation of either pyridoxine 5'-phosphate (PNP) or pyridoxamine 5'-phosphate (PMP) into pyridoxal 5'-phosphate (PLP). The protein is Pyridoxine/pyridoxamine 5'-phosphate oxidase of Polaromonas sp. (strain JS666 / ATCC BAA-500).